The chain runs to 771 residues: PH and SEC7 domain-containing protein 2 (771 aa).

Disordered stretches follow at residues 1–67 and 107–136; these read MEED…PDVA and GDNASRSLYPDAEDPQLGLDGPGEPDVRDG. Basic and acidic residues predominate over residues 47 to 66; sequence GHERRGTPADTEEPTKDPDV. The residue at position 191 (Ser-191) is a Phosphoserine. Disordered stretches follow at residues 207–230 and 244–307; these read GDMGAAGGDGELGSPLRRSISSSR and PNGF…ANGC. A compositionally biased stretch (low complexity) spans 218–230; that stretch reads LGSPLRRSISSSR. Over residues 257-266 the composition is skewed to acidic residues; that stretch reads GDEDDDEEDT. Positions 260 to 462 constitute an SEC7 domain; the sequence is DDDEEDTDKL…KTLYNSIKNE (203 aa). Over residues 288 to 299 the composition is skewed to low complexity; sequence ELSSSEGLEPGS. The PH domain occupies 512–625; sequence TTYKHGVLTR…WILRINLVAA (114 aa). A helical membrane pass occupies residues 622–639; sequence LVAAIFSAPAFPAAVSSM. The stretch at 651 to 680 forms a coiled coil; it reads TTRLCQEEQLRSHENKLRQLTAELAEHRCH. The disordered stretch occupies residues 739 to 771; it reads DDPSLRKTHSSPALSQGHVTGSKTTKDATGPDT. The segment covering 748–761 has biased composition (polar residues); the sequence is SSPALSQGHVTGSK.

Belongs to the PSD family.

The protein resides in the cell membrane. Its subcellular location is the cell projection. It localises to the ruffle membrane. The protein localises to the cleavage furrow. In Homo sapiens (Human), this protein is PH and SEC7 domain-containing protein 2 (PSD2).